We begin with the raw amino-acid sequence, 109 residues long: NAD(P)H-quinone oxidoreductase subunit M (109 aa).

It belongs to the complex I NdhM subunit family. In terms of assembly, NDH-1 can be composed of about 15 different subunits; different subcomplexes with different compositions have been identified which probably have different functions.

The protein resides in the cellular thylakoid membrane. It catalyses the reaction a plastoquinone + NADH + (n+1) H(+)(in) = a plastoquinol + NAD(+) + n H(+)(out). The enzyme catalyses a plastoquinone + NADPH + (n+1) H(+)(in) = a plastoquinol + NADP(+) + n H(+)(out). NDH-1 shuttles electrons from an unknown electron donor, via FMN and iron-sulfur (Fe-S) centers, to quinones in the respiratory and/or the photosynthetic chain. The immediate electron acceptor for the enzyme in this species is believed to be plastoquinone. Couples the redox reaction to proton translocation, and thus conserves the redox energy in a proton gradient. Cyanobacterial NDH-1 also plays a role in inorganic carbon-concentration. The sequence is that of NAD(P)H-quinone oxidoreductase subunit M from Microcystis aeruginosa (strain NIES-843 / IAM M-2473).